The chain runs to 1489 residues: DEAD-box ATP-dependent DNA helicase Fancm (1489 aa).

In terms of domain architecture, Helicase ATP-binding spans 65–237; the sequence is IVQSALFKNT…AVCRNLYISN (173 aa). 78 to 85 is a binding site for ATP; sequence LPTGLGKT. Residues 185-188 carry the DEAH box motif; it reads DEAH. The region spanning 418–584 is the Helicase C-terminal domain; it reads KLRQVLVQHF…VVKLSLYEQN (167 aa). 6 disordered regions span residues 591-647, 980-1000, 1145-1182, 1196-1222, 1255-1293, and 1452-1489; these read KFQP…ESQQ, VEESQRSTPISIADSSGESNH, TETIKNSENKNSHEDGSRTVSPDIFGSDSMSPLKPQGK, VLPCPPPNSVGLNSPENRKRTNPSIQE, NPTISVPKDEEDSPIARRPSKRKIVISSDEEEEQKPQIA, and ERRKQRRLGKVPSAPVNKRRRLQTISTSSDEDDVVLID. A compositionally biased stretch (basic and acidic residues) spans 594–610; sequence PKCEEKHMEPVAEEKPK. Over residues 611–625 the composition is skewed to basic residues; the sequence is PKSAAKTKESRKRKQ. Residues 985–998 are compositionally biased toward polar residues; the sequence is RSTPISIADSSGES. The segment covering 1149-1161 has biased composition (basic and acidic residues); it reads KNSENKNSHEDGS. A compositionally biased stretch (acidic residues) spans 1480–1489; that stretch reads SDEDDVVLID.

It belongs to the DEAD box helicase family. DEAH subfamily. FANCM sub-subfamily.

It localises to the nucleus. It catalyses the reaction ATP + H2O = ADP + phosphate + H(+). The enzyme catalyses Couples ATP hydrolysis with the unwinding of duplex DNA by translocating in the 3'-5' direction.. Its function is as follows. A ssDNA-dependent ATPase with 3' to 5' helicase activity. Involved in multiple DNA-damage responses, some that require ATPase and helicase activity and some that are independent of these. Involved in DNA interstrand cross-link repair, probably together with Fancl and other Fanconi anemia pathway homologs. Independent of Fancl involved in DNA double strand break repair, including contributing to the synthesis-dependent strand annealing (SDSA) pathway. Probably contributes to SDSA by unwinding short duplex regions in complex D-loop-like DNA structures. In Drosophila melanogaster (Fruit fly), this protein is DEAD-box ATP-dependent DNA helicase Fancm.